The chain runs to 226 residues: Lipoprotein-releasing system ATP-binding protein LolD (226 aa).

Residues 5–226 form the ABC transporter domain; that stretch reads LKATNINKIY…LLRNGHWENY (222 aa). 41–48 is a binding site for ATP; that stretch reads GTSGSGKS.

The protein belongs to the ABC transporter superfamily. Lipoprotein translocase (TC 3.A.1.125) family. The complex is composed of two ATP-binding proteins (LolD) and two transmembrane proteins (LolC and LolE).

It is found in the cell inner membrane. Functionally, part of the ABC transporter complex LolCDE involved in the translocation of mature outer membrane-directed lipoproteins, from the inner membrane to the periplasmic chaperone, LolA. Responsible for the formation of the LolA-lipoprotein complex in an ATP-dependent manner. The protein is Lipoprotein-releasing system ATP-binding protein LolD of Psychrobacter cryohalolentis (strain ATCC BAA-1226 / DSM 17306 / VKM B-2378 / K5).